A 113-amino-acid chain; its full sequence is Propane 2-monooxygenase, effector component (113 aa).

It belongs to the TmoD/XamoD family. As to quaternary structure, the propane 2-monooxygenase multicomponent enzyme system is composed of an electron transfer component and a monooxygenase component interacting with the effector protein PrmD. The electron transfer component is composed of a reductase (PrmB), and the monooxygenase component is formed by a large subunit (PrmA) and a small subunit (PrmC).

In terms of biological role, effector component of the propane 2-monooxygenase multicomponent enzyme system which is involved in the degradation of propane via the O2-dependent hydroxylation of propane. In Rhodococcus jostii (strain RHA1), this protein is Propane 2-monooxygenase, effector component.